A 423-amino-acid polypeptide reads, in one-letter code: Divalent metal cation transporter MntH (423 aa).

11 consecutive transmembrane segments (helical) span residues 31-51 (LMML…GNFA), 58-78 (SSFG…AMLI), 116-136 (IIAI…FQLV), 137-157 (FGIS…MILI), 168-188 (VVIG…LFFA), 213-233 (AAGI…SALF), 254-274 (IAMV…AAVF), 302-322 (VLFG…GTMA), 342-362 (FITM…TDIL), 363-383 (VMSQ…LLIF), and 401-421 (YAGV…MVTL).

It belongs to the NRAMP family.

The protein resides in the cell inner membrane. Its function is as follows. H(+)-stimulated, divalent metal cation uptake system. This chain is Divalent metal cation transporter MntH, found in Vibrio campbellii (strain ATCC BAA-1116).